We begin with the raw amino-acid sequence, 436 residues long: Citrate synthase (436 aa).

Residues His313 and Asp371 contribute to the active site.

This sequence belongs to the citrate synthase family. As to quaternary structure, homohexamer.

It catalyses the reaction oxaloacetate + acetyl-CoA + H2O = citrate + CoA + H(+). The protein operates within carbohydrate metabolism; tricarboxylic acid cycle; isocitrate from oxaloacetate: step 1/2. The polypeptide is Citrate synthase (aarA) (Acetobacter aceti).